A 735-amino-acid chain; its full sequence is MKPCNNIAITPELIAQHGLKNDEYQHILTLIGREPTFTELGIFSAMWNEHCSYKSSKKWLKTLPTKGNCVIQGPGENAGVVDIGEGQCVVFKMESHNHPSYIEPYQGAATGVGGILRDVFTMGARPIAAMNALRFGSPDHPRTRYLVAGVVSGIGGYSNAFGVPTVGGEINFDERYNGNILVNAFVAGIAKKDSIFYSKAQGVGLPVVYLGAKTGRDGVGGATMASAEFDDSISEKRPTVQVGDPFTEKCLLEACLELMELGAVVAIQDMGAAGLTSSAVEMGAKGDLGIKLNLDKVPVREENMTAYEMMLSESQERMLMVLKPELEKQASAIFHKWGLHFSIIGQTTDDLRFRVLHQGEEVVNLPIKELGNEAPVYDRPWSEPTPQPILKVEEVKKVENLGDVLLTLLNSAHQSSRRWVYEQYDTLIQGNTLVRPGADAGVIRVSSNDKRALAFSSDVTPRYCEADPYEGGKQAVAECWRNISTTGAMPLAATDNLNFGNPEKPEIMGQLVLAIKGIGEACRVLDFPIVSGNVSLYNETNGEAILPTPTIAGVGLLDDWSKMVTISGMQNGDSIVLIGDCGSHLGQSIYARNVLNINTGAPPHVDLQLEKKHGQFVRDVIHRGFVHAAHDISDGGLAIALAEMVIKAKKGIKAKLSNRLPHHAELFGEDQGRYLLSIKPYVLNHLKELAQVNAVSLTEIGRVEGNSLNIEGILTLSVDKLTQAYESWFPQFMGE.

The active site involves H50. 2 residues coordinate ATP: Y53 and K92. E94 provides a ligand contact to Mg(2+). Substrate-binding positions include 95-98 (SHNH) and R117. H96 serves as the catalytic Proton acceptor. Residue D118 participates in Mg(2+) binding. Substrate is bound at residue Q241. D269 provides a ligand contact to Mg(2+). 313–315 (ESQ) is a substrate binding site. Residues D495 and G532 each coordinate ATP. Residue N533 coordinates Mg(2+). Substrate is bound at residue S535.

It belongs to the FGAMS family. Monomer. Part of the FGAM synthase complex composed of 1 PurL, 1 PurQ and 2 PurS subunits.

It localises to the cytoplasm. It catalyses the reaction N(2)-formyl-N(1)-(5-phospho-beta-D-ribosyl)glycinamide + L-glutamine + ATP + H2O = 2-formamido-N(1)-(5-O-phospho-beta-D-ribosyl)acetamidine + L-glutamate + ADP + phosphate + H(+). It functions in the pathway purine metabolism; IMP biosynthesis via de novo pathway; 5-amino-1-(5-phospho-D-ribosyl)imidazole from N(2)-formyl-N(1)-(5-phospho-D-ribosyl)glycinamide: step 1/2. Part of the phosphoribosylformylglycinamidine synthase complex involved in the purines biosynthetic pathway. Catalyzes the ATP-dependent conversion of formylglycinamide ribonucleotide (FGAR) and glutamine to yield formylglycinamidine ribonucleotide (FGAM) and glutamate. The FGAM synthase complex is composed of three subunits. PurQ produces an ammonia molecule by converting glutamine to glutamate. PurL transfers the ammonia molecule to FGAR to form FGAM in an ATP-dependent manner. PurS interacts with PurQ and PurL and is thought to assist in the transfer of the ammonia molecule from PurQ to PurL. The sequence is that of Phosphoribosylformylglycinamidine synthase subunit PurL from Bartonella henselae (strain ATCC 49882 / DSM 28221 / CCUG 30454 / Houston 1) (Rochalimaea henselae).